Consider the following 660-residue polypeptide: tRNA 5-methylaminomethyl-2-thiouridine biosynthesis bifunctional protein MnmC (660 aa).

Residues 1–242 form a tRNA (mnm(5)s(2)U34)-methyltransferase region; the sequence is MTDRIVPATL…KRAMLVGEFA (242 aa). Positions 266-660 are FAD-dependent cmnm(5)s(2)U34 oxidoreductase; the sequence is IGAGLAGCAV…VRALRHGRVA (395 aa).

This sequence in the N-terminal section; belongs to the methyltransferase superfamily. tRNA (mnm(5)s(2)U34)-methyltransferase family. The protein in the C-terminal section; belongs to the DAO family. The cofactor is FAD.

It localises to the cytoplasm. It carries out the reaction 5-aminomethyl-2-thiouridine(34) in tRNA + S-adenosyl-L-methionine = 5-methylaminomethyl-2-thiouridine(34) in tRNA + S-adenosyl-L-homocysteine + H(+). Catalyzes the last two steps in the biosynthesis of 5-methylaminomethyl-2-thiouridine (mnm(5)s(2)U) at the wobble position (U34) in tRNA. Catalyzes the FAD-dependent demodification of cmnm(5)s(2)U34 to nm(5)s(2)U34, followed by the transfer of a methyl group from S-adenosyl-L-methionine to nm(5)s(2)U34, to form mnm(5)s(2)U34. In Burkholderia mallei (strain NCTC 10247), this protein is tRNA 5-methylaminomethyl-2-thiouridine biosynthesis bifunctional protein MnmC.